A 319-amino-acid chain; its full sequence is Aspartate carbamoyltransferase catalytic subunit (319 aa).

The carbamoyl phosphate site is built by arginine 57 and threonine 58. Lysine 85 provides a ligand contact to L-aspartate. Arginine 107, histidine 140, and glutamine 143 together coordinate carbamoyl phosphate. 2 residues coordinate L-aspartate: arginine 173 and arginine 227. Carbamoyl phosphate contacts are provided by glycine 268 and proline 269.

It belongs to the aspartate/ornithine carbamoyltransferase superfamily. ATCase family. Heterododecamer (2C3:3R2) of six catalytic PyrB chains organized as two trimers (C3), and six regulatory PyrI chains organized as three dimers (R2).

It carries out the reaction carbamoyl phosphate + L-aspartate = N-carbamoyl-L-aspartate + phosphate + H(+). It participates in pyrimidine metabolism; UMP biosynthesis via de novo pathway; (S)-dihydroorotate from bicarbonate: step 2/3. In terms of biological role, catalyzes the condensation of carbamoyl phosphate and aspartate to form carbamoyl aspartate and inorganic phosphate, the committed step in the de novo pyrimidine nucleotide biosynthesis pathway. This chain is Aspartate carbamoyltransferase catalytic subunit, found in Mycobacterium tuberculosis (strain ATCC 25177 / H37Ra).